The chain runs to 248 residues: Triosephosphate isomerase (248 aa).

Residues Asn-11 and Lys-13 each coordinate substrate. His-95 serves as the catalytic Electrophile. Glu-165 acts as the Proton acceptor in catalysis.

This sequence belongs to the triosephosphate isomerase family. Homodimer.

The protein resides in the cytoplasm. It catalyses the reaction D-glyceraldehyde 3-phosphate = dihydroxyacetone phosphate. It carries out the reaction dihydroxyacetone phosphate = methylglyoxal + phosphate. It functions in the pathway carbohydrate degradation; glycolysis; D-glyceraldehyde 3-phosphate from glycerone phosphate: step 1/1. Its pathway is carbohydrate biosynthesis; gluconeogenesis. In terms of biological role, triosephosphate isomerase is an extremely efficient metabolic enzyme that catalyzes the interconversion between dihydroxyacetone phosphate (DHAP) and D-glyceraldehyde-3-phosphate (G3P) in glycolysis and gluconeogenesis. Functionally, it is also responsible for the non-negligible production of methylglyoxal a reactive cytotoxic side-product that modifies and can alter proteins, DNA and lipids. The protein is Triosephosphate isomerase (tpi1) of Oryzias latipes (Japanese rice fish).